The primary structure comprises 266 residues: CD82 antigen (266 aa).

The Cytoplasmic portion of the chain corresponds to 1–11; sequence MGAGCVKVTKY. A lipid anchor (S-palmitoyl cysteine) is attached at C5. A helical transmembrane segment spans residues 12–32; sequence FLFLFNLLFFILGAVILGFGV. Residues 33 to 53 are Extracellular-facing; it reads WILADKSSFISVLQTSSSSLQ. Residues 54–72 traverse the membrane as a helical segment; sequence VGAYVFIGVGAITMLMGFL. At 73–83 the chain is on the cytoplasmic side; it reads GCIGAVNEVRC. The S-palmitoyl cysteine moiety is linked to residue C74. Residues 84-110 form a helical membrane-spanning segment; the sequence is LLGLYFVFLLLILIAQVTVEVLFYFNA. At 111–227 the chain is on the extracellular side; that stretch reads NKLKQEMGNT…KAQAWLQENF (117 aa). Residues N127, N131, N157, N166, and N197 are each glycosylated (N-linked (GlcNAc...) asparagine). Residues 228 to 249 form a helical membrane-spanning segment; it reads GILLGVCAGVAVIELLGLFLSI. The Cytoplasmic portion of the chain corresponds to 250-266; the sequence is CLCRYIHSEDYSKVPKY.

The protein belongs to the tetraspanin (TM4SF) family. In terms of assembly, forms homooligomers. Interacts directly with IGSF8. Interacts with EGFR. Interacts with VEGFA and PDGFA. Interacts with ITGA4. Interacts with ITGA6; this interaction reduces ITGA6 cell surface expression. Interacts with ITGB1. Interacts with TLR4; this interaction inhibits TLR4-mediated signaling pathway. Interacts with TLR9. Interacts with PLAUR. Palmitoylated. Palmitoylation contributes to oligomerization and surface expression.

The protein resides in the cell membrane. Its function is as follows. Structural component of specialized membrane microdomains known as tetraspanin-enriched microdomains (TERMs), which act as platforms for receptor clustering and signaling. Participates thereby in diverse biological functions such as cell signal transduction, adhesion, migration and protein trafficking. Acts as a attenuator of EGF signaling, facilitating ligand-induced endocytosis of the receptor and its subsequent desensitization. Mechanistically, modulates ligand-induced ubiquitination and trafficking of EGFR via E3 ligase CBL phosphorylation by PKC. Increases cell-matrix adhesion by regulating the membrane organization of integrin alpha4/ITA4. Modulates adhesion and suppresses cell migration through other integrins such as the alpha6/ITGA6 and beta1/ITGB1. Decreases cell-associated plasminogen activation by interfering with the interaction between urokinase-type plasminogen activator/PLAU and its receptor PLAUR. Associates with CD4 or CD8 and delivers costimulatory signals for the TCR/CD3 pathway. Plays a role in the restrains phagocyte migration but supports macrophage activation. Plays a role in TLR9 trafficking to acidified CpG-containing compartments by controlling interaction between TLR9 and VAMP3 and subsequent myddosome assembly. Inhibits LPS-induced inflammatory response by preventing binding of LPS to TLR4 on the cell surface. Plays a role in the activation of macrophages into anti-inflammatory phenotypes. Independently of Toll-like receptor (TLR) signaling, is recruited to pathogen-containing phagosomes prior to fusion with lysosomes and participates in antigen presentation. Also acts to control angiogenesis and switch angiogenic milieu to quiescent state by binding and sequestering VEGFA and PDGFA to inhibit the signaling they trigger via their respective cell surface receptor. The polypeptide is CD82 antigen (Cd82) (Rattus norvegicus (Rat)).